A 1373-amino-acid polypeptide reads, in one-letter code: Actin cytoskeleton-regulatory complex protein PAN1 (1373 aa).

An EH 1 domain is found at 116-205 (DQKKFEHLFR…EKWANEVKSF (90 aa)). The 36-residue stretch at 149–184 (LTPVTLAEIWSLSDTNKSGSLLFPEFALSLHLCSMA) folds into the EF-hand 1 domain. Disordered regions lie at residues 271–362 (GGGL…QQQS) and 385–409 (AQRT…QPTG). 2 stretches are compositionally biased toward low complexity: residues 290 to 309 (TTSF…PLAS) and 341 to 362 (PQQL…QQQS). Polar residues predominate over residues 389–408 (GPLQSQSTGFQPAPLQSQPT). The 90-residue stretch at 465–554 (EKSIYDGIFQ…PELIPPSNKY (90 aa)) folds into the EH 2 domain. Residues 498–533 (LSRPDLESIWTLADTSDRGKLNKDEFSVAMHLVYRR) enclose the EF-hand 2 domain. Disordered regions lie at residues 562–622 (MKNS…SSSD), 739–758 (SWNP…NGEV), 876–914 (QNSS…RTPE), 931–1089 (RLAK…TAED), 1103–1335 (EAVP…APPV), and 1349–1373 (GKSL…TVLS). The segment covering 571–580 (NNKSYSGGKQ) has biased composition (polar residues). The segment covering 581-590 (TKSDGTRFKN) has biased composition (basic and acidic residues). Polar residues predominate over residues 739 to 752 (SWNPDSNESEIQGT). Low complexity-rich tracts occupy residues 878-909 (SSSL…ASSS) and 965-977 (PAVV…SPPV). A coiled-coil region spans residues 1007-1066 (DDEEYAAILKQKQQLEAKEKERKLAKQKQKQARLDKIKKEMEEIKRRQAEAEAEEDSDEE). 2 stretches are compositionally biased toward basic and acidic residues: residues 1019–1030 (QQLEAKEKERKL) and 1038–1056 (ARLD…RQAE). Residues 1057-1067 (AEAEEDSDEEP) show a composition bias toward acidic residues. 2 stretches are compositionally biased toward polar residues: residues 1070 to 1079 (VPTYTVSNSA) and 1118 to 1134 (NPFS…STNP). Positions 1139 to 1149 (TTKESTIDPKK) are enriched in basic and acidic residues. Residues 1154–1166 (RASQRGLSKNDGW) are compositionally biased toward polar residues. Residues 1167-1177 (SDSDDNESEDD) are compositionally biased toward acidic residues. Positions 1250 to 1326 (PPIPTEVPPI…PPPPGPPPPV (77 aa)) are enriched in pro residues. Residues 1338-1355 (DIGALLGQIQGGKSLKKV) enclose the WH2 domain. The span at 1357–1373 (ASQQKISSNDLAGTVLS) shows a compositional bias: polar residues.

Belongs to the PAN1 family. In terms of assembly, component of the PAN1 actin cytoskeleton-regulatory complex.

It is found in the cell membrane. The protein localises to the endosome membrane. It localises to the cytoplasm. The protein resides in the cytoskeleton. Its subcellular location is the actin patch. Component of the PAN1 actin cytoskeleton-regulatory complex required for the internalization of endosomes during actin-coupled endocytosis. The complex links the site of endocytosis to the cell membrane-associated actin cytoskeleton. Mediates uptake of external molecules and vacuolar degradation of plasma membrane proteins. Plays a role in the proper organization of the cell membrane-associated actin cytoskeleton and promotes its destabilization. This is Actin cytoskeleton-regulatory complex protein PAN1 (PAN1) from Scheffersomyces stipitis (strain ATCC 58785 / CBS 6054 / NBRC 10063 / NRRL Y-11545) (Yeast).